Here is a 185-residue protein sequence, read N- to C-terminus: ATP-dependent protease subunit HslV (185 aa).

Threonine 12 is a catalytic residue. The Na(+) site is built by alanine 168, cysteine 171, and threonine 174.

This sequence belongs to the peptidase T1B family. HslV subfamily. A double ring-shaped homohexamer of HslV is capped on each side by a ring-shaped HslU homohexamer. The assembly of the HslU/HslV complex is dependent on binding of ATP.

It is found in the cytoplasm. It carries out the reaction ATP-dependent cleavage of peptide bonds with broad specificity.. With respect to regulation, allosterically activated by HslU binding. Functionally, protease subunit of a proteasome-like degradation complex believed to be a general protein degrading machinery. The protein is ATP-dependent protease subunit HslV of Cereibacter sphaeroides (strain ATCC 17023 / DSM 158 / JCM 6121 / CCUG 31486 / LMG 2827 / NBRC 12203 / NCIMB 8253 / ATH 2.4.1.) (Rhodobacter sphaeroides).